A 348-amino-acid polypeptide reads, in one-letter code: Protein RecA (348 aa).

G64–T71 provides a ligand contact to ATP.

This sequence belongs to the RecA family.

It is found in the cytoplasm. Can catalyze the hydrolysis of ATP in the presence of single-stranded DNA, the ATP-dependent uptake of single-stranded DNA by duplex DNA, and the ATP-dependent hybridization of homologous single-stranded DNAs. It interacts with LexA causing its activation and leading to its autocatalytic cleavage. This chain is Protein RecA, found in Blastochloris viridis (Rhodopseudomonas viridis).